We begin with the raw amino-acid sequence, 301 residues long: Probable 5-dehydro-4-deoxyglucarate dehydratase (301 aa).

Belongs to the DapA family.

The enzyme catalyses 5-dehydro-4-deoxy-D-glucarate + H(+) = 2,5-dioxopentanoate + CO2 + H2O. The protein operates within carbohydrate acid metabolism; D-glucarate degradation; 2,5-dioxopentanoate from D-glucarate: step 2/2. This chain is Probable 5-dehydro-4-deoxyglucarate dehydratase, found in Chelativorans sp. (strain BNC1).